We begin with the raw amino-acid sequence, 880 residues long: Translation initiation factor IF-2 (880 aa).

Basic and acidic residues predominate over residues 143–228 (EAEAKAKAKA…EAERNGDHHI (86 aa)). Residues 143 to 289 (EAEAKAKAKA…APESMAHGFN (147 aa)) are disordered. A compositionally biased stretch (basic residues) spans 249–262 (GRRARNKSNAKKRG). The tr-type G domain occupies 380 to 549 (SRAPVVTIMG…LLQAEVLELK (170 aa)). The tract at residues 389-396 (GHVDHGKT) is G1. GTP is bound at residue 389 to 396 (GHVDHGKT). The segment at 414 to 418 (GITQH) is G2. The tract at residues 435 to 438 (DTPG) is G3. Residues 435–439 (DTPGH) and 489–492 (NKMD) each bind GTP. The G4 stretch occupies residues 489 to 492 (NKMD). The segment at 525–527 (SAK) is G5.

Belongs to the TRAFAC class translation factor GTPase superfamily. Classic translation factor GTPase family. IF-2 subfamily.

It is found in the cytoplasm. Its function is as follows. One of the essential components for the initiation of protein synthesis. Protects formylmethionyl-tRNA from spontaneous hydrolysis and promotes its binding to the 30S ribosomal subunits. Also involved in the hydrolysis of GTP during the formation of the 70S ribosomal complex. In Shewanella putrefaciens (strain CN-32 / ATCC BAA-453), this protein is Translation initiation factor IF-2.